Here is a 172-residue protein sequence, read N- to C-terminus: RNA pyrophosphohydrolase (172 aa).

The Nudix hydrolase domain occupies 6–149; the sequence is GYRLNVGIVI…KRDVYRRAMK (144 aa). The Nudix box motif lies at 38 to 59; the sequence is GGIDDGETPEQAMFRELYEEVG.

Belongs to the Nudix hydrolase family. RppH subfamily. A divalent metal cation is required as a cofactor.

Its function is as follows. Accelerates the degradation of transcripts by removing pyrophosphate from the 5'-end of triphosphorylated RNA, leading to a more labile monophosphorylated state that can stimulate subsequent ribonuclease cleavage. This chain is RNA pyrophosphohydrolase, found in Vibrio vulnificus (strain CMCP6).